The primary structure comprises 194 residues: Peptidyl-tRNA hydrolase (194 aa).

Tyr16 contributes to the tRNA binding site. Catalysis depends on His21, which acts as the Proton acceptor. Residues Phe67, Asn69, and Asn115 each contribute to the tRNA site.

Belongs to the PTH family. In terms of assembly, monomer.

The protein localises to the cytoplasm. The catalysed reaction is an N-acyl-L-alpha-aminoacyl-tRNA + H2O = an N-acyl-L-amino acid + a tRNA + H(+). Hydrolyzes ribosome-free peptidyl-tRNAs (with 1 or more amino acids incorporated), which drop off the ribosome during protein synthesis, or as a result of ribosome stalling. Its function is as follows. Catalyzes the release of premature peptidyl moieties from peptidyl-tRNA molecules trapped in stalled 50S ribosomal subunits, and thus maintains levels of free tRNAs and 50S ribosomes. The protein is Peptidyl-tRNA hydrolase of Salmonella paratyphi B (strain ATCC BAA-1250 / SPB7).